Consider the following 84-residue polypeptide: Small ribosomal subunit protein bS18 (84 aa).

Belongs to the bacterial ribosomal protein bS18 family. Part of the 30S ribosomal subunit. Forms a tight heterodimer with protein bS6.

Binds as a heterodimer with protein bS6 to the central domain of the 16S rRNA, where it helps stabilize the platform of the 30S subunit. This chain is Small ribosomal subunit protein bS18, found in Methylorubrum extorquens (strain CM4 / NCIMB 13688) (Methylobacterium extorquens).